The following is a 1541-amino-acid chain: Multiple epidermal growth factor-like domains protein 6 (1541 aa).

The first 30 residues, 1 to 30 (MSFLEEARAAGRAVVLALVLLLLPAVPVGA), serve as a signal peptide directing secretion. The 82-residue stretch at 44–125 (MPHVCAEQEL…QQPDEEGCLS (82 aa)) folds into the EMI domain. 15 cysteine pairs are disulfide-bonded: C48/C111, C77/C83, C110/C123, C128/C139, C133/C147, C149/C158, C165/C176, C172/C185, C187/C200, C242/C255, C248/C268, C270/C283, C289/C300, C296/C309, and C311/C324. The EGF-like 1 domain occupies 124-159 (LSAECSASLCFHGGRCVPGSAQPCHCPPGFQGPRCQ). The region spanning 161–201 (DVDECRTHNGGCQHRCVNTPGSYLCECKPGFRLHTDSRTCL) is the EGF-like 2; calcium-binding domain. EGF-like domains are found at residues 206–242 (CALG…GRHC) and 238–284 (DGRH…KACE). N-linked (GlcNAc...) asparagine glycosylation occurs at N252. In terms of domain architecture, EGF-like 5; calcium-binding spans 285 to 325 (DVDECAAGLAQCAHGCLNTQGSFKCVCHAGYELGADGRQCY). 2 EGF-like domains span residues 335-370 (CEAN…QRTC) and 375-411 (DCAD…CGCE). The 41-residue stretch at 412 to 452 (DVDECASSRGGCEHHCTNLAGSFQCSCEAGYRLHEDRRGCS) folds into the EGF-like 8; calcium-binding domain. 12 disulfides stabilise this stretch: C416/C427, C423/C436, C438/C451, C520/C533, C527/C540, C542/C551, C564/C576, C570/C583, C585/C594, C607/C619, C613/C626, and C628/C637. EGF-like domains lie at 516 to 552 (FGHD…LICN), 560 to 595 (FGKN…TNCE), 603 to 638 (YGKH…RFCH), 736 to 770 (FGVN…EDCE), 783 to 814 (QEIC…SRCQ), 822 to 857 (YGPS…FSCQ), 865 to 901 (WGPD…PRCE), 909 to 944 (FGPG…TFCE), 955 to 987 (DCRS…PRCA), 995 to 1030 (YGHN…PSCL), 1038 to 1073 (YGDN…LACE), 1081 to 1116 (VRAG…DKCQ), 1124 to 1159 (FGEA…SGCE), 1211 to 1246 (YGPG…TDCN), 1254 to 1289 (FGPN…VRCE), 1297 to 1332 (FGVG…RHCE), 1345 to 1375 (HLEC…QACE), 1383 to 1418 (HGAG…HFCE), and 1469 to 1504 (FGPS…PTCR). A glycan (N-linked (GlcNAc...) asparagine) is linked at N739. Cystine bridges form between C740–C751, C744–C758, C760–C769, C786–C795, C789–C802, C804–C813, C826–C838, C832–C845, C847–C856, C869–C882, C873–C889, C891–C900, C913–C925, C919–C932, and C934–C943. Cystine bridges form between C999–C1011, C1005–C1018, C1020–C1029, C1042–C1054, C1048–C1061, C1063–C1072, C1085–C1097, C1091–C1104, C1106–C1115, C1128–C1140, C1134–C1147, C1149–C1158, C1215–C1227, C1221–C1234, C1236–C1245, C1258–C1270, C1264–C1277, C1279–C1288, C1301–C1313, C1307–C1320, C1322–C1331, C1348–C1356, C1350–C1363, C1365–C1374, C1387–C1399, C1393–C1406, C1408–C1417, C1473–C1485, C1479–C1492, and C1494–C1503. A disordered region spans residues 1509–1541 (LRLPENPSLAQGSAGTLPASSRPTSRSGGPARH). The segment covering 1516–1535 (SLAQGSAGTLPASSRPTSRS) has biased composition (polar residues).

Its subcellular location is the secreted. This Homo sapiens (Human) protein is Multiple epidermal growth factor-like domains protein 6 (MEGF6).